The sequence spans 66 residues: Large ribosomal subunit protein bL33c (66 aa).

Belongs to the bacterial ribosomal protein bL33 family.

Its subcellular location is the plastid. It localises to the chloroplast. This Nasturtium officinale (Watercress) protein is Large ribosomal subunit protein bL33c.